A 362-amino-acid chain; its full sequence is Probable branched-chain-amino-acid aminotransferase (362 aa).

K202 bears the N6-(pyridoxal phosphate)lysine mark.

It belongs to the class-IV pyridoxal-phosphate-dependent aminotransferase family. Pyridoxal 5'-phosphate is required as a cofactor.

It carries out the reaction L-leucine + 2-oxoglutarate = 4-methyl-2-oxopentanoate + L-glutamate. The catalysed reaction is L-isoleucine + 2-oxoglutarate = (S)-3-methyl-2-oxopentanoate + L-glutamate. It catalyses the reaction L-valine + 2-oxoglutarate = 3-methyl-2-oxobutanoate + L-glutamate. It participates in amino-acid biosynthesis; L-isoleucine biosynthesis; L-isoleucine from 2-oxobutanoate: step 4/4. It functions in the pathway amino-acid biosynthesis; L-leucine biosynthesis; L-leucine from 3-methyl-2-oxobutanoate: step 4/4. Its pathway is amino-acid biosynthesis; L-valine biosynthesis; L-valine from pyruvate: step 4/4. Functionally, acts on leucine, isoleucine and valine. The sequence is that of Probable branched-chain-amino-acid aminotransferase (ilvE) from Streptomyces coelicolor (strain ATCC BAA-471 / A3(2) / M145).